We begin with the raw amino-acid sequence, 455 residues long: C4-dicarboxylate transport protein (455 aa).

Helical transmembrane passes span 20 to 40 (HLYF…HFYP), 59 to 79 (MIIA…MGTL), 91 to 111 (GYFL…ANVI), 160 to 180 (GNIL…ILIG), 209 to 229 (PIGA…ASVV), 231 to 251 (LATL…VVLG), 344 to 364 (LLLV…AGFI), and 367 to 387 (AATL…ILGV).

Belongs to the dicarboxylate/amino acid:cation symporter (DAACS) (TC 2.A.23) family.

It localises to the cell inner membrane. Its function is as follows. Responsible for the transport of dicarboxylates such as succinate, fumarate, and malate from the periplasm across the membrane. The chain is C4-dicarboxylate transport protein from Paracoccus denitrificans (strain Pd 1222).